The sequence spans 271 residues: Type III pantothenate kinase (271 aa).

6–13 (DVRNTNIV) contributes to the ATP binding site. 109–112 (GADR) contacts substrate. Residue aspartate 111 is the Proton acceptor of the active site. A K(+)-binding site is contributed by aspartate 131. Threonine 134 lines the ATP pocket. Threonine 186 contributes to the substrate binding site.

It belongs to the type III pantothenate kinase family. As to quaternary structure, homodimer. NH4(+) is required as a cofactor. The cofactor is K(+).

The protein localises to the cytoplasm. The enzyme catalyses (R)-pantothenate + ATP = (R)-4'-phosphopantothenate + ADP + H(+). It functions in the pathway cofactor biosynthesis; coenzyme A biosynthesis; CoA from (R)-pantothenate: step 1/5. Its function is as follows. Catalyzes the phosphorylation of pantothenate (Pan), the first step in CoA biosynthesis. The protein is Type III pantothenate kinase of Rhodococcus opacus (strain B4).